The chain runs to 52 residues: Ribosome biogenesis protein Nop10 (52 aa).

It belongs to the NOP10 family.

Its function is as follows. Involved in ribosome biogenesis; more specifically in 18S rRNA pseudouridylation and in cleavage of pre-rRNA. In Methanococcus vannielii (strain ATCC 35089 / DSM 1224 / JCM 13029 / OCM 148 / SB), this protein is Ribosome biogenesis protein Nop10.